Consider the following 68-residue polypeptide: Beta-defensin 1 (68 aa).

An N-terminal signal peptide occupies residues 1-21 (MRTSYLLLFTLCLLLSEMASG). Positions 22–32 (DNFLTGLGHRS) are excised as a propeptide. 3 disulfides stabilise this stretch: C37-C66, C44-C59, and C49-C67.

It belongs to the beta-defensin family. As to quaternary structure, monomer. Homodimer.

Its subcellular location is the secreted. It localises to the membrane. In terms of biological role, has bactericidal activity. May act as a ligand for C-C chemokine receptor CCR6. Positively regulates the sperm motility and bactericidal activity in a CCR6-dependent manner. Binds to CCR6 and triggers Ca2+ mobilization in the sperm which is important for its motility. This is Beta-defensin 1 (DEFB1) from Allochrocebus preussi (Preuss's monkey).